The chain runs to 521 residues: MGFLIAYVFNLSPCSGDEMFETIGLAIIHFEGLNTNRVSKCNQNWHQESKQVAMELIQKVSQGLWELENCDTVNSVVVLGKEYPPVPEQRQEERHENGVNMFQHIFTRQGRWNEEFLADVHTRLHFTYRTRFVPIPRHPNGPSPMSISVMLRDNPLNVIENVLNNPDCFQTDIGWGCMIRTGQSLLANALQRACLGRDFRIDDNAANEHELRIIKWFEDDPKYPFSLHKFVQEGFSLSGKKPGEWFGPSATSRSIQALVAKFPACGIAHCVISTDSGDVYMDEVEPLFRADPSAAVLLLLCVRLGVDVVNEVYWEHIRHILSSEHSVGIAGGRPSSSLYFFGYQDEHLFYLDPHKPQLNLASYQQDLDLFRSVHTQRFNKVHMSDIDPSMLIGILLNGKDDWQLWQQHIASSQIIHLSDSKPVDLMLDHQLESAILGDRYLSEDGQGPSSKVDTGDYIDVGSFVPCTDSSCKINESEDEYQDVKCKNQRIVVVGETTTNGSPEVEVEKVLVEKETIPVRSK.

Residue Cys177 is the Nucleophile of the active site. Active-site residues include Asp352 and His354.

This sequence belongs to the peptidase C54 family.

It is found in the cytoplasm. Its subcellular location is the nucleus. The protein resides in the preautophagosomal structure. The catalysed reaction is [protein]-C-terminal L-amino acid-glycyl-phosphatidylethanolamide + H2O = [protein]-C-terminal L-amino acid-glycine + a 1,2-diacyl-sn-glycero-3-phosphoethanolamine. Functionally, cysteine protease that plays a key role in cytoplasm to vacuole transport (Cvt) and autophagy by mediating both proteolytic activation and delipidation of ATG8. Required for selective autophagic degradation of the nucleus (nucleophagy) as well as for mitophagy which contributes to regulate mitochondrial quantity and quality by eliminating the mitochondria to a basal level to fulfill cellular energy requirements and preventing excess ROS production. The protease activity is required for proteolytic activation of ATG8: cleaves the C-terminal amino acid of ATG8 to reveal a C-terminal glycine. ATG8 ubiquitin-like activity requires the exposure of the glycine at the C-terminus for its conjugation to phosphatidylethanolamine (PE) and its insertion to membranes, which is necessary for autophagy. The ATG8-PE conjugate mediates tethering between adjacent membranes and stimulates membrane hemifusion, leading to expansion of the autophagosomal membrane during autophagy. In addition to the protease activity, also catalyzes deconjugation of PE-conjugated forms of ATG8 during macroautophagy: ATG8 delipidation is required to release the protein from membranes, which facilitates multiple events during macroautophagy, and especially for efficient autophagosome biogenesis, the assembly of ATG9-containing tubulovesicular clusters into phagophores/autophagosomes, and for the disassembly of PAS-associated ATG components. ATG8 delipidation by ATG4 also recycles ATG8-PE generated on inappropriate membranes to maintain a reservoir of unlipidated ATG8 that is required for autophagosome formation at the PAS. The polypeptide is Probable cysteine protease ATG4 (ATG4) (Eremothecium gossypii (strain ATCC 10895 / CBS 109.51 / FGSC 9923 / NRRL Y-1056) (Yeast)).